We begin with the raw amino-acid sequence, 203 residues long: LexA repressor (203 aa).

Positions 28–48 form a DNA-binding region, H-T-H motif; that stretch reads RAEIASQLGFRSPNAAEEHLK. Catalysis depends on for autocatalytic cleavage activity residues Ser120 and Lys157.

This sequence belongs to the peptidase S24 family. As to quaternary structure, homodimer.

The enzyme catalyses Hydrolysis of Ala-|-Gly bond in repressor LexA.. In terms of biological role, represses a number of genes involved in the response to DNA damage (SOS response), including recA and lexA. Binds to the 16 bp palindromic sequence 5'-CTGTATATATATACAG-3'. In the presence of single-stranded DNA, RecA interacts with LexA causing an autocatalytic cleavage which disrupts the DNA-binding part of LexA, leading to derepression of the SOS regulon and eventually DNA repair. The polypeptide is LexA repressor (Proteus mirabilis (strain HI4320)).